Reading from the N-terminus, the 88-residue chain is Large ribosomal subunit protein bL31B (88 aa).

The protein belongs to the bacterial ribosomal protein bL31 family. Type B subfamily. In terms of assembly, part of the 50S ribosomal subunit.

In Leuconostoc mesenteroides subsp. mesenteroides (strain ATCC 8293 / DSM 20343 / BCRC 11652 / CCM 1803 / JCM 6124 / NCDO 523 / NBRC 100496 / NCIMB 8023 / NCTC 12954 / NRRL B-1118 / 37Y), this protein is Large ribosomal subunit protein bL31B.